The primary structure comprises 100 residues: U-myrmeciitoxin(01)-Mg7c (100 aa).

Residues 1–17 (MKLSYLSLALAIILVLA) form the signal peptide. A propeptide spanning residues 18–50 (IVYSPHMEVKALADAEPDAIGFADAFGEADAEP) is cleaved from the precursor. The O-linked (GalNAc...) serine glycan is linked to S85. Residues T94 and T95 are each glycosylated (O-linked (GalNAc...) threonine).

This sequence belongs to the formicidae venom precursor-01 superfamily. In terms of processing, glycosylation is critical to maintaining the aqueous solubility of this protein, but does not directly contribute to its activity. In terms of tissue distribution, expressed by the venom gland.

It is found in the secreted. Its subcellular location is the target cell membrane. Functionally, neurotoxin that triggers pain behavior and inflammation in mammals, and is paralytic and lethal to insects. Causes a time-dependent increase in cell leak current. May act by targeting membranes. The sequence is that of U-myrmeciitoxin(01)-Mg7c from Myrmecia gulosa (Red bulldog ant).